A 724-amino-acid chain; its full sequence is Catalase-peroxidase (724 aa).

The segment at 1 to 20 (MDENKTKPAGKCPVMHGGNT) is disordered. Residues 98–225 (WHSAGTYRTA…LAAVQMGLIY (128 aa)) constitute a cross-link (tryptophyl-tyrosyl-methioninium (Trp-Tyr) (with M-251)). His99 (proton acceptor) is an active-site residue. The segment at residues 225–251 (YVNPEGVDGNPDPLRTAQDMRVTFSRM) is a cross-link (tryptophyl-tyrosyl-methioninium (Tyr-Met) (with W-98)). Position 266 (His266) interacts with heme b.

This sequence belongs to the peroxidase family. Peroxidase/catalase subfamily. In terms of assembly, homodimer or homotetramer. Heme b serves as cofactor. Formation of the three residue Trp-Tyr-Met cross-link is important for the catalase, but not the peroxidase activity of the enzyme.

It catalyses the reaction H2O2 + AH2 = A + 2 H2O. The catalysed reaction is 2 H2O2 = O2 + 2 H2O. Functionally, bifunctional enzyme with both catalase and broad-spectrum peroxidase activity. In Pectobacterium carotovorum subsp. carotovorum (strain PC1), this protein is Catalase-peroxidase.